The following is a 71-amino-acid chain: Protein CYSTEINE-RICH TRANSMEMBRANE MODULE 8 (71 aa).

A compositionally biased stretch (polar residues) spans 1–22 (MNQSAQNYFSVQKPSETSSGPY). A disordered region spans residues 1 to 35 (MNQSAQNYFSVQKPSETSSGPYTSPPPIGYPTRDA). A helical membrane pass occupies residues 48–64 (NSKGVNPEGCCAAICCC).

The protein belongs to the CYSTM1 family. As to expression, mostly expressed in stems, siliques, roots and flowers and, to a lower extent, in leaves.

The protein localises to the membrane. Its subcellular location is the nucleus. Its function is as follows. Involved in resistance to abiotic stress. The protein is Protein CYSTEINE-RICH TRANSMEMBRANE MODULE 8 of Arabidopsis thaliana (Mouse-ear cress).